The chain runs to 493 residues: Neisserial heparin binding antigen (493 aa).

The N-terminal stretch at 1-22 is a signal peptide; it reads MKEMMMFKRSVIAMACIFALSA. Cysteine 23 carries N-palmitoyl cysteine lipidation. The S-diacylglycerol cysteine moiety is linked to residue cysteine 23. The segment at 27–206 is disordered; sequence GGGSPDVKSA…NPAPANGGSN (180 aa). A compositionally biased stretch (basic and acidic residues) spans 48 to 58; that stretch reads SEKETEAKEDA. Positions 59–75 are enriched in low complexity; the sequence is PQAGSQGQGAPSAQGSQ. Polar residues-rich tracts occupy residues 106–123 and 132–147; these read DMPQNAAGTDSSTPNHTP and MENQATDAGESSQPAN. A compositionally biased stretch (low complexity) spans 165–188; that stretch reads AGGQNAGNTAAQGANQAGNNQAAG. An Arg-rich motif motif is present at residues 301-311; the sequence is RFRRSARSRRS.

Belongs to the NHBA family. In terms of assembly, the C-terminal beta-barrel forms a monomer. In terms of processing, cleaved in vivo by the Neisserial phase-variable autotransporter/serine protease NalP to give 2 fragments. The N-terminus remains in the cell outer membrane while the C-terminus (beginning on Ser-298) is soluble; this soluble fragment is called C2. Cleaved in vitro by human lactoferrin (LTF, between Arg-310 and Ser-311), this fragment is called C1. Recombinant and cell surface protein is cleaved by human saliva kallikrein (KLK1) between Ser-308 and Arg-309; in saliva kallikrein is more active on NHBA than lactoferrin. Human plasma kallikrein (KLKB1) cleaves in a similar manner to KLK1.

Its subcellular location is the cell outer membrane. A major human immunogenic protein detected in patients recovering from meningitidis, where it induces bactericidal antibodies. Binds human cells, heparin and heparan sulfate proteoglycan in vitro via the Arg-rich motif. Heparin-binding to this protein protects bacteria against killing by bactericidal antibodies (serum killing). The bacteria binds a number of human extracellular sialyated and/or sulfated glycans via this protein, including chondroitin sulfate, heparin and ganglioside GT3. Whole protein binds DNA. Its function is as follows. Plays a role in extracellular-DNA (eDNA) mediated biofilm formation. In some strains (including cc32 strain H44/76 but not cc11 strain B16B6) eDNA stimulates biofilm formation. When NHBA is not processed by NalP, biofilm formation increases. This is probably because the number of positively charged, NHBA- and IgA-derived DNA-binding peptides on the cell surface rises, resulting in increased DNA-binding peptides and increased biofilm formation. The chain is Neisserial heparin binding antigen from Neisseria meningitidis serogroup B / serotype 15 (strain H44/76).